A 195-amino-acid polypeptide reads, in one-letter code: Anaphase-promoting complex subunit 10 (195 aa).

Positions 1–21 are disordered; that stretch reads MAASMDEDITANPPPSSEEDP. Positions 9 to 193 constitute a DOC domain; it reads ITANPPPSSE…GTVDFQKFAT (185 aa).

The protein belongs to the APC10 family. As to quaternary structure, the APC is composed of at least 11 subunits.

Component of the anaphase promoting complex/cyclosome (APC/C), a cell cycle-regulated ubiquitin ligase that controls progression through mitosis and the G1 phase of the cell cycle. The polypeptide is Anaphase-promoting complex subunit 10 (APC10) (Drosophila melanogaster (Fruit fly)).